Consider the following 333-residue polypeptide: Ketol-acid reductoisomerase (NADP(+)) (333 aa).

One can recognise a KARI N-terminal Rossmann domain in the interval 1-181 (MKVYYDQDAD…GGARSGVIET (181 aa)). Residues 24–27 (YGSQ), Arg-47, and 82–85 (DEVQ) each bind NADP(+). Residue His-107 is part of the active site. An NADP(+)-binding site is contributed by Gly-133. Positions 182-327 (TFREETETDL…KELRSMMPWL (146 aa)) constitute a KARI C-terminal knotted domain. Mg(2+) contacts are provided by Asp-190, Glu-194, Glu-226, and Glu-230. A substrate-binding site is contributed by Ser-251.

Belongs to the ketol-acid reductoisomerase family. It depends on Mg(2+) as a cofactor.

It catalyses the reaction (2R)-2,3-dihydroxy-3-methylbutanoate + NADP(+) = (2S)-2-acetolactate + NADPH + H(+). It carries out the reaction (2R,3R)-2,3-dihydroxy-3-methylpentanoate + NADP(+) = (S)-2-ethyl-2-hydroxy-3-oxobutanoate + NADPH + H(+). Its pathway is amino-acid biosynthesis; L-isoleucine biosynthesis; L-isoleucine from 2-oxobutanoate: step 2/4. The protein operates within amino-acid biosynthesis; L-valine biosynthesis; L-valine from pyruvate: step 2/4. Functionally, involved in the biosynthesis of branched-chain amino acids (BCAA). Catalyzes an alkyl-migration followed by a ketol-acid reduction of (S)-2-acetolactate (S2AL) to yield (R)-2,3-dihydroxy-isovalerate. In the isomerase reaction, S2AL is rearranged via a Mg-dependent methyl migration to produce 3-hydroxy-3-methyl-2-ketobutyrate (HMKB). In the reductase reaction, this 2-ketoacid undergoes a metal-dependent reduction by NADPH to yield (R)-2,3-dihydroxy-isovalerate. The chain is Ketol-acid reductoisomerase (NADP(+)) from Desulfovibrio desulfuricans (strain ATCC 27774 / DSM 6949 / MB).